The following is an 815-amino-acid chain: Plakophilin-2 (815 aa).

Over residues 1-12 (MLKPHPEHKEQP) the composition is skewed to basic and acidic residues. Disordered stretches follow at residues 1-31 (MLKP…MAEE) and 76-105 (QLTL…ISSS). Positions 13 to 25 (QDSFTPSGDSTPD) are enriched in polar residues. Over residues 91–105 (SSLAESQSSCQISSS) the composition is skewed to low complexity. 9 ARM repeats span residues 317 to 357 (KGKP…NQCF), 360 to 399 (PDAK…NIVF), 402 to 442 (NENK…NLSS), 457 to 498 (PLTD…NLSS), 501 to 547 (PDGR…NLSY), 604 to 644 (PHGV…NLTA), 652 to 691 (AIAH…NISR), 693 to 737 (RELH…NLSQ), and 740 to 783 (ASNT…TLWR).

The protein belongs to the beta-catenin family.

The protein localises to the nucleus. Its subcellular location is the cell junction. It is found in the desmosome. The protein resides in the cytoplasm. Its function is as follows. Required for development of the heart, potentially via cell-cell adhesion and modulation of expression of cardiac precursor genes. Plays a role in desmosome cell-cell junctions and their intracellular connectivity. This is Plakophilin-2 from Danio rerio (Zebrafish).